The chain runs to 292 residues: UDP-3-O-acyl-N-acetylglucosamine deacetylase (292 aa).

Positions 75, 231, and 235 each coordinate Zn(2+). The active-site Proton donor is the His258.

The protein belongs to the LpxC family. The cofactor is Zn(2+).

It catalyses the reaction a UDP-3-O-[(3R)-3-hydroxyacyl]-N-acetyl-alpha-D-glucosamine + H2O = a UDP-3-O-[(3R)-3-hydroxyacyl]-alpha-D-glucosamine + acetate. The protein operates within glycolipid biosynthesis; lipid IV(A) biosynthesis; lipid IV(A) from (3R)-3-hydroxytetradecanoyl-[acyl-carrier-protein] and UDP-N-acetyl-alpha-D-glucosamine: step 2/6. Functionally, catalyzes the hydrolysis of UDP-3-O-myristoyl-N-acetylglucosamine to form UDP-3-O-myristoylglucosamine and acetate, the committed step in lipid A biosynthesis. The chain is UDP-3-O-acyl-N-acetylglucosamine deacetylase from Nautilia profundicola (strain ATCC BAA-1463 / DSM 18972 / AmH).